A 305-amino-acid polypeptide reads, in one-letter code: tRNA dimethylallyltransferase (305 aa).

14–21 (GPTTSGKT) is an ATP binding site. A substrate-binding site is contributed by 16–21 (TTSGKT). Interaction with substrate tRNA stretches follow at residues 39–42 (DSAL), 163–167 (QRITR), and 243–248 (RCVGYR).

This sequence belongs to the IPP transferase family. In terms of assembly, monomer. Mg(2+) serves as cofactor.

The catalysed reaction is adenosine(37) in tRNA + dimethylallyl diphosphate = N(6)-dimethylallyladenosine(37) in tRNA + diphosphate. Functionally, catalyzes the transfer of a dimethylallyl group onto the adenine at position 37 in tRNAs that read codons beginning with uridine, leading to the formation of N6-(dimethylallyl)adenosine (i(6)A). In Ruthia magnifica subsp. Calyptogena magnifica, this protein is tRNA dimethylallyltransferase.